The sequence spans 135 residues: Interleukin-4 (135 aa).

The signal sequence occupies residues 1–24 (MGLTSQLIPVLVCLLVCTSHFVHG). Cystine bridges form between C27–C135, C48–C85, and C70–C105. The N-linked (GlcNAc...) asparagine glycan is linked to N62.

It belongs to the IL-4/IL-13 family.

Its subcellular location is the secreted. In terms of biological role, participates in at least several B-cell activation processes as well as of other cell types. It is a costimulator of DNA-synthesis. It induces the expression of class II MHC molecules on resting B-cells. It enhances both secretion and cell surface expression of IgE and IgG1. It also regulates the expression of the low affinity Fc receptor for IgE (CD23) on both lymphocytes and monocytes. Positively regulates IL31RA expression in macrophages. Stimulates autophagy in dendritic cells by interfering with mTORC1 signaling and through the induction of RUFY4. The chain is Interleukin-4 (IL4) from Bos taurus (Bovine).